Consider the following 398-residue polypeptide: Cytochrome b561 and DOMON domain-containing protein At3g61750 (398 aa).

An N-terminal signal peptide occupies residues 1-23; sequence MKTLVGFYILCFLIGQDLPFLAA. Positions 64–177 constitute a DOMON domain; that stretch reads NTFVLRYSEN…PRRAVILAFS (114 aa). The Cytochrome b561 domain maps to 184–377; that stretch reads LGRLTKHDDK…LEIFRIRGTI (194 aa). Residue histidine 220 coordinates heme b. 2 helical membrane passes run 222–242 and 252–272; these read VMAI…ARYL and LHIG…ILGI. Residues histidine 253 and histidine 285 each coordinate heme b. Helical transmembrane passes span 287 to 307, 320 to 340, and 351 to 371; these read GIGI…FARP, YHHW…VLGI, and KIGY…LEIF. Histidine 321 serves as a coordination point for heme b.

It depends on heme b as a cofactor.

The protein resides in the membrane. Its function is as follows. May act as a catecholamine-responsive trans-membrane electron transporter. The protein is Cytochrome b561 and DOMON domain-containing protein At3g61750 of Arabidopsis thaliana (Mouse-ear cress).